The primary structure comprises 80 residues: Metallothionein-like protein type 2 MET1 (80 aa).

This sequence belongs to the metallothionein superfamily. Type 15 family.

Functionally, metallothioneins have a high content of cysteine residues that bind various heavy metals. This is Metallothionein-like protein type 2 MET1 (MET1) from Fragaria ananassa (Strawberry).